Reading from the N-terminus, the 584-residue chain is Beta-(1--&gt;2)glucan export ATP-binding/permease protein NdvA (584 aa).

Positions 21-301 constitute an ABC transmembrane type-1 domain; that stretch reads VSLVVAANII…MRQFSTQIFE (281 aa). A run of 6 helical transmembrane segments spans residues 29–49, 57–77, 136–156, 158–178, 248–268, and 272–292; these read IILAVITIAEPILFGWIIDAI, DILFLWGGFGIFNTIAFVLVA, THLATAVALVLLVPTAFSMDV, LTLVLIVLGLIYVAIGKMVMD, IASTASMLIILIIGTMLVQSG, and VGDVIAFIGFANLLIARLDQM. An ABC transporter domain is found at 335 to 569; the sequence is VEFRHVSFDF…GGRFAALLHT (235 aa). Residue 368–375 coordinates ATP; that stretch reads GPTGAGKT.

It belongs to the ABC transporter superfamily. Beta-(1--&gt;2)glucan exporter (TC 3.A.1.108.1) family. Homodimer.

It is found in the cell inner membrane. The enzyme catalyses [(1-&gt;2)-beta-D-glucosyl](n)(in) + ATP + H2O = [(1-&gt;2)-beta-D-glucosyl](n)(out) + ADP + phosphate + H(+). Its function is as follows. Involved in beta-(1--&gt;2)glucan export. Transmembrane domains (TMD) form a pore in the inner membrane and the ATP-binding domain (NBD) is responsible for energy generation. In Agrobacterium vitis (Rhizobium vitis), this protein is Beta-(1--&gt;2)glucan export ATP-binding/permease protein NdvA.